A 250-amino-acid polypeptide reads, in one-letter code: Functional amyloid subunit FapC (250 aa).

Residues 1–24 form the signal peptide; it reads MKPTMALKPLVFALAALMAVAAQA. One copy of the FapC_R1 repeat lies at 62–95; that stretch reads NNAGANGSLSNSKGNLGANIAAGSGNQQDNAAAI. Positions 96 to 126 are linker 1; that stretch reads TSSAGDAATVFAVADIYQESKDNKFTNKGTQ. Residues 127-160 form a FapC_R2 repeat; the sequence is NNALLNNSANNSSGNVGVNVAAGQGNQQKNNLAI. Positions 161-199 are linker 2; it reads VTADGKNVAAASNTEQVSLDNHFLNEASSKHSYKPQYVV. The FapC_R3 repeat unit spans residues 200 to 233; sequence NNAGLLNSANNASGNIGVNVAAGAGNQQSNTLTL. Residues 237-240 carry the Cys-X-X-Cys motif; the sequence is CTVC.

This sequence belongs to the FapB/FapC family. In terms of assembly, the major component of purified amyloid fibrils. Forms fibrils in vitro; in the presence of FapA the fibrils are about 50% wider. Interacts with FapA. Fibrillates in vitro; this is inhibited by FapA. Fibrils are resistant to boiling in 2% (weight/vol) SDS and require &gt;90% (vol/vol) formic acid to dissolve.

It is found in the fimbrium. It localises to the secreted. In terms of biological role, the major functional amyloid subunit in this bacterium. Intrinsically disordered in its monomeric state. Upon overexpression of the endogenous six-gene locus (fapA-fapF) in situ, cells form large clumps during liquid growth, make large amounts of biofilm and produce amyloid fibrils. Expression of the 6 gene operon in E.coli strain BL21(DE3) induces flocculation and biofilm formation with copious extracellular fibrils. In Pseudomonas fluorescens, this protein is Functional amyloid subunit FapC.